We begin with the raw amino-acid sequence, 28 residues long: Trypsin inhibitor 4 (28 aa).

Cystine bridges form between C2–C19, C9–C21, and C15–C27.

This sequence belongs to the protease inhibitor I7 (squash-type serine protease inhibitor) family.

The protein resides in the secreted. Its function is as follows. Inhibits trypsin. The sequence is that of Trypsin inhibitor 4 from Luffa aegyptiaca (Sponge gourd).